A 129-amino-acid chain; its full sequence is SPbeta prophage-derived protein NrdI (129 aa).

This sequence belongs to the NrdI family.

Probably involved in ribonucleotide reductase function. This chain is SPbeta prophage-derived protein NrdI (nrdIB), found in Bacillus subtilis (strain 168).